Here is a 917-residue protein sequence, read N- to C-terminus: Hexokinase-2 (917 aa).

An N-acetylmethionine modification is found at methionine 1. The interval 1–16 is mitochondrial-binding peptide (MBP); the sequence is MIASHMIACLFTELNQ. Hexokinase domains are found at residues 16–458 and 464–906; these read QNQV…MVTA and ADQH…LITA. Residues arginine 30 and 84–89 contribute to the ATP site; that span reads DLGGTN. Positions 73–207 are hexokinase small subdomain 1; the sequence is DGTEHGEFLA…DFDIDIVAVV (135 aa). 84-88 serves as a coordination point for D-glucose 6-phosphate; the sequence is DLGGT. D-glucose is bound by residues 155–156, 172–173, and 208–209; these read SF, TK, and ND. The segment at 208–447 is hexokinase large subdomain 1; the sequence is NDTVGTMMTC…CDVRFLRSED (240 aa). D-glucose 6-phosphate-binding residues include aspartate 209 and threonine 232. D-glucose is bound by residues asparagine 235, glutamate 260, and 291-294; that span reads QLFE. 413–415 lines the D-glucose 6-phosphate pocket; the sequence is DGS. 425–426 is an ATP binding site; it reads KR. Residues serine 449 and 532–536 contribute to the D-glucose 6-phosphate site; that span reads DLGGT. The tract at residues 521–655 is hexokinase small subdomain 2; that stretch reads DGTEKGDFLA…EFDLDVVAVV (135 aa). 532–537 provides a ligand contact to ATP; that stretch reads DLGGTN. Residues 603–604, 620–621, and 656–657 each bind D-glucose; these read SF, TK, and ND. Residues 656 to 895 form a hexokinase large subdomain 2 region; the sequence is NDTVGTMMTC…CDVSFLESED (240 aa). Residues aspartate 657 and threonine 680 each contribute to the D-glucose 6-phosphate site. ATP is bound at residue threonine 680. Residues 682–683, glutamate 708, and 739–742 contribute to the D-glucose site; these read SN and QRFE. ATP is bound by residues 747 to 748, 784 to 788, and 863 to 867; these read GM, TKFLS, and TLYKL. Residues 861–863 and serine 897 contribute to the D-glucose 6-phosphate site; that span reads DGT.

It belongs to the hexokinase family. Monomer. Interacts with TIGAR; the interaction increases hexokinase activity in a hypoxia- and HIF1A-dependent manner.

It localises to the mitochondrion outer membrane. It is found in the cytoplasm. The protein resides in the cytosol. It catalyses the reaction a D-hexose + ATP = a D-hexose 6-phosphate + ADP + H(+). The enzyme catalyses D-fructose + ATP = D-fructose 6-phosphate + ADP + H(+). It carries out the reaction D-glucose + ATP = D-glucose 6-phosphate + ADP + H(+). It functions in the pathway carbohydrate metabolism; hexose metabolism. The protein operates within carbohydrate degradation; glycolysis; D-glyceraldehyde 3-phosphate and glycerone phosphate from D-glucose: step 1/4. Hexokinase activity is specifically inhibited by 2,6-disubstituted glucosamines. Catalyzes the phosphorylation of hexose, such as D-glucose and D-fructose, to hexose 6-phosphate (D-glucose 6-phosphate and D-fructose 6-phosphate, respectively). Mediates the initial step of glycolysis by catalyzing phosphorylation of D-glucose to D-glucose 6-phosphate. Plays a key role in maintaining the integrity of the outer mitochondrial membrane by preventing the release of apoptogenic molecules from the intermembrane space and subsequent apoptosis. In Rattus norvegicus (Rat), this protein is Hexokinase-2.